The following is a 529-amino-acid chain: uncharacterized protein (529 aa).

A helical membrane pass occupies residues 354–373 (FHVASFPWISWAILGSYIML).

It localises to the host membrane. This is an uncharacterized protein from Acidianus convivator (ATV).